The primary structure comprises 372 residues: Putative glutamate--cysteine ligase 2 (372 aa).

The protein belongs to the glutamate--cysteine ligase type 2 family. YbdK subfamily. In terms of assembly, homodimer.

The enzyme catalyses L-cysteine + L-glutamate + ATP = gamma-L-glutamyl-L-cysteine + ADP + phosphate + H(+). In terms of biological role, ATP-dependent carboxylate-amine ligase which exhibits weak glutamate--cysteine ligase activity. The sequence is that of Putative glutamate--cysteine ligase 2 (ybdK) from Salmonella agona (strain SL483).